A 392-amino-acid polypeptide reads, in one-letter code: GTPase Obg (392 aa).

Positions 1–159 (MKFVDEATIL…RDLQLELMLL (159 aa)) constitute an Obg domain. Residues 127–146 (NTRFKSSVNRTPRQKTMGTP) form a disordered region. The segment covering 129–143 (RFKSSVNRTPRQKTM) has biased composition (polar residues). The OBG-type G domain maps to 160–333 (ADVGMLGLPN…LCWDVMAFIK (174 aa)). Residues 166-173 (GLPNAGKS), 191-195 (FTTLV), 213-216 (DIPG), 283-286 (NKVD), and 314-316 (SAA) contribute to the GTP site. Residues serine 173 and threonine 193 each contribute to the Mg(2+) site. The tract at residues 360-392 (QLEEAQPEVEEDDDWDDDWDEDDEEGVETIYQR) is disordered. Over residues 364-386 (AQPEVEEDDDWDDDWDEDDEEGV) the composition is skewed to acidic residues.

The protein belongs to the TRAFAC class OBG-HflX-like GTPase superfamily. OBG GTPase family. As to quaternary structure, monomer. Requires Mg(2+) as cofactor.

The protein resides in the cytoplasm. In terms of biological role, an essential GTPase which binds GTP, GDP and possibly (p)ppGpp with moderate affinity, with high nucleotide exchange rates and a fairly low GTP hydrolysis rate. Plays a role in control of the cell cycle, stress response, ribosome biogenesis and in those bacteria that undergo differentiation, in morphogenesis control. The chain is GTPase Obg from Erwinia tasmaniensis (strain DSM 17950 / CFBP 7177 / CIP 109463 / NCPPB 4357 / Et1/99).